A 248-amino-acid chain; its full sequence is Ribosomal RNA small subunit methyltransferase G (248 aa).

Residues Gly85, Phe90, 137-138, and Arg156 each bind S-adenosyl-L-methionine; that span reads IE.

It belongs to the methyltransferase superfamily. RNA methyltransferase RsmG family.

Its subcellular location is the cytoplasm. Its function is as follows. Specifically methylates the N7 position of a guanine in 16S rRNA. The sequence is that of Ribosomal RNA small subunit methyltransferase G from Parasynechococcus marenigrum (strain WH8102).